Reading from the N-terminus, the 100-residue chain is MDLTPREKDKLLIFTAGLVAERRLARGVKLNYPEAMAYISAALLEGARDGQTVAELMHYGTTLLTREQVMEGIPEMIPEIQVEATFPDGTKLVTVHQPIV.

This sequence belongs to the urease gamma subunit family. In terms of assembly, heterotrimer of UreA (gamma), UreB (beta) and UreC (alpha) subunits. Three heterotrimers associate to form the active enzyme.

The protein resides in the cytoplasm. It catalyses the reaction urea + 2 H2O + H(+) = hydrogencarbonate + 2 NH4(+). Its pathway is nitrogen metabolism; urea degradation; CO(2) and NH(3) from urea (urease route): step 1/1. The chain is Urease subunit gamma from Pseudomonas fluorescens (strain Pf0-1).